Reading from the N-terminus, the 476-residue chain is Cysteine--tRNA ligase (476 aa).

Position 31 (Cys-31) interacts with Zn(2+). The 'HIGH' region signature appears at 33–43; it reads PTVYNYAHIGN. Positions 211, 236, and 240 each coordinate Zn(2+). The 'KMSKS' region motif lies at 269–273; that stretch reads KMSKS. Lys-272 is an ATP binding site.

This sequence belongs to the class-I aminoacyl-tRNA synthetase family. Monomer. Zn(2+) serves as cofactor.

It localises to the cytoplasm. The catalysed reaction is tRNA(Cys) + L-cysteine + ATP = L-cysteinyl-tRNA(Cys) + AMP + diphosphate. This chain is Cysteine--tRNA ligase, found in Xanthomonas oryzae pv. oryzae (strain MAFF 311018).